The sequence spans 541 residues: Glucans biosynthesis protein D (541 aa).

A signal peptide (tat-type signal) is located at residues 1–29 (MHRRNLLKASMAIAAYTGLSASGLLAAQA).

It belongs to the OpgD/OpgG family. Predicted to be exported by the Tat system. The position of the signal peptide cleavage has not been experimentally proven.

The protein localises to the periplasm. Its pathway is glycan metabolism; osmoregulated periplasmic glucan (OPG) biosynthesis. In terms of biological role, probably involved in the control of the structural glucose backbone of osmoregulated periplasmic glucans (OPGs). The sequence is that of Glucans biosynthesis protein D from Pseudomonas fluorescens (strain SBW25).